A 421-amino-acid polypeptide reads, in one-letter code: MMSMNSKQPHFAMHPTLPEHKYPSLHSSSEAIRRACLPTPPLQSNLFASLDETLLARAEALAAVDIAVSQGKSHPFKPDATYHTMNSVPCTSTSTVPLAHHHHHHHHHQALEPGDLLDHISSPSLALMAGAGGAGAAGGGGGAHDGPGGGGGPGGGGGPGGGGPGGGGGGGGPGGGGGGPGGGLLGGSAHPHPHMHGLGHLSHPAAAAAMNMPSGLPHPGLVAAAAHHGAAAAAAAAAAGQVAAASAAAAVVGAAGLASICDSDTDPRELEAFAERFKQRRIKLGVTQADVGSALANLKIPGVGSLSQSTICRFESLTLSHNNMIALKPILQAWLEEAEGAQREKMNKPELFNGGEKKRKRTSIAAPEKRSLEAYFAVQPRPSSEKIAAIAEKLDLKKNVVRVWFCNQRQKQKRMKFSATY.

The short motif at 57-66 (RAEALAAVDI) is the POU-IV box element. Disordered regions lie at residues 94–117 (STVPLAHHHHHHHHHQALEPGDLL) and 133–200 (GAGA…GLGH). Residues 99–108 (AHHHHHHHHH) show a composition bias toward basic residues. Positions 133 to 186 (GAGAAGGGGGAHDGPGGGGGPGGGGGPGGGGPGGGGGGGGPGGGGGGPGGGLLG) are enriched in gly residues. The POU-specific domain maps to 262-339 (DSDTDPRELE…ILQAWLEEAE (78 aa)). Residues 357-416 (KKRKRTSIAAPEKRSLEAYFAVQPRPSSEKIAAIAEKLDLKKNVVRVWFCNQRQKQKRMK) constitute a DNA-binding region (homeobox).

This sequence belongs to the POU transcription factor family. Class-4 subfamily. In terms of assembly, interacts (via N-terminus) with RIT2; the interaction controls POU4F1 transactivation activity on some neuronal target genes. Isoform 1 interacts with POU4F2 isoform 2; this interaction inhibits both POU4F1 DNA-binding and transcriptional activities. Isoform 1 interacts (C-terminus) with ESR1 (via DNA-binding domain); this interaction decreases the estrogen receptor ESR1 transcriptional activity in a DNA- and ligand 17-beta-estradiol-independent manner. In terms of tissue distribution, expressed in mature osteoclasts (at protein level). Brain, peripheral sensory nervous system and retina. In the adult nervous system, predominates in the medial habenula, superficial gray of the superior colliculus, red nucleus, mesencephalic nucleus of the trigeminal ganglion, nucleus ambiguus, inferior olivary nucleus, and peripheral sensory ganglia.

The protein resides in the nucleus. The protein localises to the cytoplasm. Its function is as follows. Multifunctional transcription factor with different regions mediating its different effects. Acts by binding (via its C-terminal domain) to sequences related to the consensus octamer motif 5'-ATGCAAAT-3' in the regulatory regions of its target genes. Regulates the expression of specific genes involved in differentiation and survival within a subset of neuronal lineages. It has been shown that activation of some of these genes requires its N-terminal domain, maybe through a neuronal-specific cofactor. Activates BCL2 expression and protects neuronal cells from apoptosis (via the N-terminal domain). Induces neuronal process outgrowth and the coordinate expression of genes encoding synaptic proteins. Exerts its major developmental effects in somatosensory neurons and in brainstem nuclei involved in motor control. Stimulates the binding affinity of the nuclear estrogene receptor ESR1 to DNA estrogen response element (ERE), and hence modulates ESR1-induced transcriptional activity. May positively regulate POU4F2 and POU4F3. Regulates dorsal root ganglion sensory neuron specification and axonal projection into the spinal cord. Plays a role in TNFSF11-mediated terminal osteoclast differentiation. Negatively regulates its own expression interacting directly with a highly conserved autoregulatory domain surrounding the transcription initiation site. Functionally, able to act as transcription factor, cannot regulate the expression of the same subset of genes than isoform 1. Does not have antiapoptotic effect on neuronal cells. The protein is POU domain, class 4, transcription factor 1 (Pou4f1) of Mus musculus (Mouse).